Consider the following 144-residue polypeptide: Large ribosomal subunit protein uL13 (144 aa).

The protein belongs to the universal ribosomal protein uL13 family. As to quaternary structure, part of the 50S ribosomal subunit.

This protein is one of the early assembly proteins of the 50S ribosomal subunit, although it is not seen to bind rRNA by itself. It is important during the early stages of 50S assembly. This chain is Large ribosomal subunit protein uL13, found in Mycoplasmopsis pulmonis (strain UAB CTIP) (Mycoplasma pulmonis).